The following is a 113-amino-acid chain: Probable UPF0122 protein (113 aa).

The protein belongs to the UPF0122 family.

Its function is as follows. Might take part in the signal recognition particle (SRP) pathway. This is inferred from the conservation of its genetic proximity to ftsY/ffh. May be a regulatory protein. This is Probable UPF0122 protein from Mycoplasma mycoides.